Consider the following 707-residue polypeptide: G protein-coupled receptor kinase 2 (707 aa).

The tract at residues 1 to 190 (MADLEAVLAD…ELNMQLTMND (190 aa)) is N-terminal. The 122-residue stretch at 54-175 (KFDKIFNQKL…LESDKFTRFC (122 aa)) folds into the RGS domain. In terms of domain architecture, Protein kinase spans 191-455 (FSVHRIIGRG…PTEVKEHPFF (265 aa)). Residues 197–205 (IGRGGFGEV) and Lys220 contribute to the ATP site. Asp318 acts as the Proton acceptor in catalysis. One can recognise an AGC-kinase C-terminal domain in the interval 456-523 (KDVDWQTVYL…VISERWQNEI (68 aa)). The 101-residue stretch at 558-658 (DVIVHGYIKK…WHTSLRTAHK (101 aa)) folds into the PH domain.

It belongs to the protein kinase superfamily. AGC Ser/Thr protein kinase family. GPRK subfamily. In terms of assembly, interacts with amx-2; the interaction promotes phosphorylation of amx-2. In terms of tissue distribution, expressed in many neurons in the adult including the ASH neurons and other sensory neurons, many interneurons, and motor neurons of the ventral nerve cord. Expressed broadly in head neurons and is detected in several head acetylcholine neurons including the AVA, AVB, AVD and AVE premotor interneurons, the SMD and RMD head motor neurons, and the AIN, AIY, SIA, SIB and SAA interneurons. Expressed in HSN motor neurons and VC4/VC5 motor neurons. Also expressed in vulval muscle cells. Expressed in premotor and RIS interneurons. Expressed in ciliated neurons such as AWA, AWB, AWC, ASH and ADF olfactory and nociceptive neurons, and in chemosensory ASH neurons. Expressed in RMG neurons and AVK interneurons.

It catalyses the reaction [G-protein-coupled receptor] + ATP = [G-protein-coupled receptor]-phosphate + ADP + H(+). Its function is as follows. Specifically phosphorylates the activated forms of G protein-coupled receptors. Required in adult sensory neurons for chemotaxis. Plays a role in the ASH sensory neurons in the chemotaxis response to NaCl where it is likely to modulate the strength of the NaCl avoidance response which occurs at high NaCl concentrations. Required in the HSN motor neurons for normal egg laying by promoting phosphorylation of amine oxidase amx-2 which inhibits amx-2 activity, preventing metabolism of serotonin. Acts in head acetylcholine neurons to positively regulate locomotion. Inactivates dopamine receptor dop-3 which leads to inactivation of guanine nucleotide-binding protein G(o) subunit goa-1 and activation of the unc-77/nca-1 and nca-2 ion channel proteins. Acts as a positive regulator of swimming by inactivating two dopamine receptors, dop-3 in the premotor interneurons that negatively controls early swimming through the nca ion channel, and dop-1 in the RIS neuron that inhibits late-stage swimming via the signaling of FMRFamide-like neuropeptide flp-11. Controls movement quiescence by negatively regulating multiple targets including egl-4 in ciliated neurons, the level of ligands of the neuropeptide receptor npr-1 in RMG neurons, and the secretion of flp-1 from AVK interneurons. The polypeptide is G protein-coupled receptor kinase 2 (grk-2) (Caenorhabditis elegans).